The sequence spans 356 residues: Replication factor C subunit 3 (356 aa).

Residue lysine 20 is modified to N6-acetyllysine. Serine 125 carries the post-translational modification Phosphoserine.

Belongs to the activator 1 small subunits family. In terms of assembly, subunit of the RFC complex, an heteropentameric complex consisting of a large subunit RFC1 and four small subunits RFC2, RFC3, RFC4 and RFC5; the RFC complex interacts with PCNA. Forms an heterotetrameric complex with RFC2, RFC4 and RFC5; this complex has ATPase activity but is not stimulated by PCNA. The heterotetramer of subunits RFC2, RFC3, RFC4 and RFC5 interacts with RAD17. Interacts with CNTD1; this interaction facilitates crossover formation.

It localises to the nucleus. Functionally, subunit of the replication factor C (RFC) complex which acts during elongation of primed DNA templates by DNA polymerases delta and epsilon, and is necessary for ATP-dependent loading of proliferating cell nuclear antigen (PCNA) onto primed DNA. In Homo sapiens (Human), this protein is Replication factor C subunit 3 (RFC3).